We begin with the raw amino-acid sequence, 365 residues long: tRNA N6-adenosine threonylcarbamoyltransferase (365 aa).

Residues His122 and His126 each contribute to the Fe cation site. Substrate is bound by residues 147-151 (LVSGG), Asp180, Gly193, and Asn293. Asp321 provides a ligand contact to Fe cation. Residues 340-365 (PNEIDTAARPRWPLSERTPATPEHVS) are disordered.

This sequence belongs to the KAE1 / TsaD family. The cofactor is Fe(2+).

The protein resides in the cytoplasm. It carries out the reaction L-threonylcarbamoyladenylate + adenosine(37) in tRNA = N(6)-L-threonylcarbamoyladenosine(37) in tRNA + AMP + H(+). Its function is as follows. Required for the formation of a threonylcarbamoyl group on adenosine at position 37 (t(6)A37) in tRNAs that read codons beginning with adenine. Is involved in the transfer of the threonylcarbamoyl moiety of threonylcarbamoyl-AMP (TC-AMP) to the N6 group of A37, together with TsaE and TsaB. TsaD likely plays a direct catalytic role in this reaction. The chain is tRNA N6-adenosine threonylcarbamoyltransferase from Gluconobacter oxydans (strain 621H) (Gluconobacter suboxydans).